Reading from the N-terminus, the 482-residue chain is MVESQKAMPQPKMGRIRRIHFVGIGGVGMCGIAEVLLNLGYEVSGSDLKASPVTERLESFGAEIFVGHRAENAATADVLVVSSAINPANPEVATALERRIPVVPRAEMLAELMRYRHGVAVAGTHGKTTTTSLLASVFAAGGLDPTFVIGGRLTAAGTNAQLGTSRYLIAEADESDASFLHLQPMVAVVTNIDADHMATYEGDFNKLKKTFVEFLHNLPFYGLAVMCLDDPVVREILPQVKRPTVTYGFSEEADIRAINVRQQGMQTHFTVLRRDREPLEVSVNMPGNHNVLNALATIAIATDEGITDEAIVQGLSGFQGVGRRFQVYGELPVEGGSVMLVDDYGHHPTEVAAVIKAVRGGWPSRRLVIVYQPHRYSRTRDLYDDFVQVLGDANVLLLMEVYPAGEEPIPGADSRQLCHSIRQRGKLDPIYIERGVELAPLVKPLLRAGDILICQGAGDVGGLAPQLMKSPLFAGAKQEKSK.

123–129 contributes to the ATP binding site; the sequence is GTHGKTT.

This sequence belongs to the MurCDEF family.

The protein resides in the cytoplasm. The enzyme catalyses UDP-N-acetyl-alpha-D-muramate + L-alanine + ATP = UDP-N-acetyl-alpha-D-muramoyl-L-alanine + ADP + phosphate + H(+). It functions in the pathway cell wall biogenesis; peptidoglycan biosynthesis. Cell wall formation. In Pseudomonas putida (strain ATCC 700007 / DSM 6899 / JCM 31910 / BCRC 17059 / LMG 24140 / F1), this protein is UDP-N-acetylmuramate--L-alanine ligase.